Reading from the N-terminus, the 131-residue chain is Profilin-7 (131 aa).

A disulfide bond links cysteine 13 and cysteine 115. Positions alanine 81 to threonine 97 match the Involved in PIP2 interaction motif. The residue at position 111 (threonine 111) is a Phosphothreonine.

Belongs to the profilin family. In terms of assembly, occurs in many kinds of cells as a complex with monomeric actin in a 1:1 ratio. Post-translationally, phosphorylated by MAP kinases.

Its subcellular location is the cytoplasm. It is found in the cytoskeleton. In terms of biological role, binds to actin and affects the structure of the cytoskeleton. At high concentrations, profilin prevents the polymerization of actin, whereas it enhances it at low concentrations. The sequence is that of Profilin-7 from Phleum pratense (Common timothy).